The chain runs to 1150 residues: C5a peptidase (1150 aa).

Residues 1-31 form the signal peptide; the sequence is MRKKQKLPFDKLAIALMSTSILLNAQSDIKA. Residues 33-73 form a disordered region; the sequence is TVTEDTPAAEQAVETPQPTAVSEEVPSSKETKTPQTPDNAE. One can recognise a Peptidase S8 domain in the interval 99 to 581; sequence KATIRDLNDP…AGAVDAKKAS (483 aa). Residues D130, H193, and S512 each act as charge relay system in the active site. Basic and acidic residues-rich tracts occupy residues 1029 to 1054 and 1061 to 1073; these read EGHSNKPEQDGSDQAPDKKPEAKPEQ and PDKKPETKPEKDS. The interval 1029-1116 is disordered; sequence EGHSNKPEQD…RDQLPTTNDK (88 aa). A run of 3 repeats spans residues 1034 to 1050, 1051 to 1067, and 1068 to 1084. Positions 1034-1084 are 3 X 17 AA tandem repeats; sequence KPEQDGSDQAPDKKPEAKPEQDGSGQTPDKKPETKPEKDSSGQTPGKTPQK. The span at 1075–1089 shows a compositional bias: polar residues; that stretch reads GQTPGKTPQKGQPSR. The LPXTG sorting signal motif lies at 1110-1114; it reads LPTTN. A Pentaglycyl murein peptidoglycan amidated threonine modification is found at T1113. The propeptide at 1114–1150 is removed by sortase; that stretch reads NDKDTNRLHLLKLVMTTFFFGLVAHIFKTKRQKETKK.

This sequence belongs to the peptidase S8 family. Post-translationally, cleaved by SpeB protease; leading to its degradation. Degradation by SpeB is probably strictly regulated to preserve integrity of C5a peptidase.

It is found in the secreted. The protein localises to the cell wall. It carries out the reaction The primary cleavage site is at 67-His-|-Lys-68 in human C5a with a minor secondary cleavage site at 58-Ala-|-Ser-59.. Its function is as follows. This virulence factor of S.pyogenes specifically cleaves the human serum chemotaxin C5a at '68-Lys-|-Asp-69' bond near its C-terminus, destroying its ability to serve as a chemoattractant. This is C5a peptidase (scpA) from Streptococcus pyogenes serotype M18 (strain MGAS8232).